The following is a 2108-amino-acid chain: Kinesin-like protein KIF26B (2108 aa).

Disordered stretches follow at residues 1–124 (MNSV…PGSD) and 263–287 (KHGS…PTHQ). Residues 40–50 (WYRKAYEESRA) show a composition bias toward basic and acidic residues. A compositionally biased stretch (low complexity) spans 58–98 (GAGSALGSSGTPSPGSGTSSPSSFTGSPGPASPGIGTSSPG). Positions 99–120 (SLGGSPGFGTGSPGSGSGGGSS) are enriched in gly residues. In terms of domain architecture, Kinesin motor spans 450–801 (KVKVMLRICS…IQIASRVLRM (352 aa)). An ATP-binding site is contributed by 546-553 (GHAKLGKS). Disordered regions lie at residues 805-825 (KTKY…GRMR), 876-917 (SDKE…GKSE), 937-1166 (DGSE…ESKK), 1406-1504 (EPEA…PVTD), 1519-1653 (GLAT…SSSK), 1685-1799 (AESL…ASKL), and 1824-1974 (RAGP…WVDG). Positions 1004–1046 (SHSPVPAAAPAHSPSPASPRSVPGSSSQHSASPLVQSPSLQSS) are enriched in low complexity. The span at 1424–1461 (RESKENSAKKEMKFEDPWLKREEEVKKETAHPNEEGMM) shows a compositional bias: basic and acidic residues. A compositionally biased stretch (low complexity) spans 1491–1500 (SSSSGEVSAS). Polar residues-rich tracts occupy residues 1521–1537 (ATQS…SSSL) and 1611–1628 (RASP…SPLN). 2 stretches are compositionally biased toward low complexity: residues 1713–1730 (SAGT…AGQS) and 1751–1763 (STTK…TKSL). The span at 1781–1795 (PWSTQSLSRNRSSGL) shows a compositional bias: polar residues. Residues 1824–1836 (RAGPEAEARGGAL) show a composition bias toward low complexity. T1855 is subject to Phosphothreonine. Composition is skewed to polar residues over residues 1866-1875 (GHGSDNSSVL) and 1907-1925 (ATGS…SSSV). The span at 1930-1948 (RSLKTPKKRSNPGSQRRRL) shows a compositional bias: basic residues. Positions 1954 to 1968 (LDTSSPVRKPPNSTG) are enriched in polar residues. Phosphoserine is present on S1958.

Belongs to the TRAFAC class myosin-kinesin ATPase superfamily. Kinesin family. KIF26 subfamily. Interacts with MYH10. In terms of processing, phosphorylation at Thr-1855 and Ser-1958 by CDKs, mainly CDK2 and CDK5, enhances the interaction with NEDD4, polyubiquitination, and subsequent proteasomal degradation. Phosphorylation occurs upon loss of interaction with microtubules. Polyubiquitinated by NEDD4, resulting in proteasomal degradation.

It is found in the cytoplasm. The protein resides in the cytoskeleton. Functionally, essential for embryonic kidney development. Plays an important role in the compact adhesion between mesenchymal cells adjacent to the ureteric buds, possibly by interacting with MYH10. This could lead to the establishment of the basolateral integrity of the mesenchyme and the polarized expression of ITGA8, which maintains the GDNF expression required for further ureteric bud attraction. Although it seems to lack ATPase activity it is constitutively associated with microtubules. This chain is Kinesin-like protein KIF26B (KIF26B), found in Homo sapiens (Human).